Here is a 257-residue protein sequence, read N- to C-terminus: Ribosomal RNA small subunit methyltransferase J (257 aa).

S-adenosyl-L-methionine-binding positions include 107 to 108, 123 to 124, and aspartate 177; these read RD and ER.

The protein belongs to the methyltransferase superfamily. RsmJ family.

Its subcellular location is the cytoplasm. It carries out the reaction guanosine(1516) in 16S rRNA + S-adenosyl-L-methionine = N(2)-methylguanosine(1516) in 16S rRNA + S-adenosyl-L-homocysteine + H(+). Its function is as follows. Specifically methylates the guanosine in position 1516 of 16S rRNA. This is Ribosomal RNA small subunit methyltransferase J from Haemophilus influenzae (strain PittEE).